A 121-amino-acid chain; its full sequence is Fluoride-specific ion channel FluC 1 (121 aa).

4 helical membrane-spanning segments follow: residues 3 to 23, 35 to 55, 64 to 84, and 92 to 112; these read YVYI…ISFL, IANL…IAFF, AITT…LELI, and FITL…LCYV. 2 residues coordinate Na(+): G71 and T74.

Belongs to the fluoride channel Fluc/FEX (TC 1.A.43) family.

It is found in the cell membrane. It catalyses the reaction fluoride(in) = fluoride(out). With respect to regulation, na(+) is not transported, but it plays an essential structural role and its presence is essential for fluoride channel function. Fluoride-specific ion channel. Important for reducing fluoride concentration in the cell, thus reducing its toxicity. This is Fluoride-specific ion channel FluC 1 from Staphylococcus aureus (strain NCTC 8325 / PS 47).